Consider the following 23-residue polypeptide: NCPYCVVYCCPPAYCEASGCRPP.

3 disulfide bridges follow: cysteine 2–cysteine 10, cysteine 5–cysteine 15, and cysteine 9–cysteine 20. Proline 23 bears the Proline amide; partial mark.

In terms of processing, the C-terminal amidation is described in Ref.1 and PubMed:23031820, but not in PubMed:22709442 and PubMed:36235146. Post-translationally, ju et al. (2022) describe a disulfide connectivity (C55-C61; C56-C69; C66-C68) that differs for the usual one. Expressed by the venom duct. Is present in all duct parts with a highest content in part 2 (proximal of the venom bulb) and then decreases in concentration toward the end of the duct.

Its subcellular location is the secreted. In terms of biological role, causes convulsions mice. The chain is Textile convulsant peptide from Conus textile (Cloth-of-gold cone).